The chain runs to 660 residues: CXXC-type zinc finger protein 1 (660 aa).

N-acetylmethionine is present on Met-1. The segment covering 1–14 has biased composition (acidic residues); it reads MEGDGSDLEPPDAG. The tract at residues 1 to 20 is disordered; the sequence is MEGDGSDLEPPDAGDDSKSE. Ser-6 and Ser-19 each carry phosphoserine. Residues 28–76 form a PHD-type zinc finger; sequence YCICRKPDINCFMIGCDNCNEWFHGDCIRITEKMAKAIREWYCRECREK. Basic and acidic residues predominate over residues 91–120; it reads ERDGSERAGSEPRDEGGGRKRPASDPELQR. Residues 91 to 166 form a disordered region; that stretch reads ERDGSERAGS…QQQQQQQQQI (76 aa). The residue at position 124 (Ser-124) is a Phosphoserine. The CXXC-type zinc finger occupies 164-213; the sequence is QQIKRSARMCGECEACRRTEDCGHCDFCRDMKKFGGPNKIRQKCRLRQCQ. 8 residues coordinate Zn(2+): Cys-173, Cys-176, Cys-179, Cys-185, Cys-188, Cys-191, Cys-207, and Cys-212. Disordered stretches follow at residues 223–287 and 328–375; these read FPSS…SDED and AVKV…DPAS. Ser-228 is modified (phosphoserine). Position 231 is a phosphothreonine (Thr-231). A Glycyl lysine isopeptide (Lys-Gly) (interchain with G-Cter in SUMO2) cross-link involves residue Lys-254. A compositionally biased stretch (basic residues) spans 328–338; the sequence is AVKVKHVKRRE. Positions 339–349 are enriched in basic and acidic residues; that stretch reads KKSEKKKEERY. The segment covering 350–362 has biased composition (basic residues); it reads KRHRQKQKHKDKW. Over residues 363 to 372 the composition is skewed to basic and acidic residues; it reads KHPERADAKD. Positions 426–479 form a coiled coil; it reads AEEHGKKLLERIRREQQSARTRLQEMERRFHELEAIILRAKQQAVREDEENNEN.

Component of the SET1 complex, at least composed of the catalytic subunit (SETD1A or SETD1B), WDR5, WDR82, RBBP5, ASH2L/ASH2, CXXC1/CFP1, HCFC1 and DPY30. Interacts with SETD1A. Interacts with ZNF335. Interacts with PRDM9; this interaction does not link PRDM9-activated recombination hotspot sites with DSB machinery and is not required for the hotspot recognition pathway. Interacts with histone H3K4me3. In terms of tissue distribution, expressed in seminiferous tubules and in both germ cells and Sertoli cells. Highly expressed in spermatogonia, weakly expressed in leptonema and zygonema, and then again high expression in pachynema and diplonema, decreasing to undetectable levels in spermatids.

The protein resides in the nucleus speckle. It is found in the nucleus. Functionally, transcriptional activator that exhibits a unique DNA binding specificity for CpG unmethylated motifs with a preference for CpGG. The chain is CXXC-type zinc finger protein 1 (Cxxc1) from Mus musculus (Mouse).